The following is a 158-amino-acid chain: Lipoprotein signal peptidase (158 aa).

3 helical membrane passes run 12-32 (LFWW…AWIV), 46-66 (IIPG…FSLF), and 71-91 (IWLR…AILG). Active-site residues include D124 and D140. The chain crosses the membrane as a helical span at residues 135-155 (VFNVADIAINIGIVCLLWSAW).

The protein belongs to the peptidase A8 family.

It localises to the cell inner membrane. The catalysed reaction is Release of signal peptides from bacterial membrane prolipoproteins. Hydrolyzes -Xaa-Yaa-Zaa-|-(S,diacylglyceryl)Cys-, in which Xaa is hydrophobic (preferably Leu), and Yaa (Ala or Ser) and Zaa (Gly or Ala) have small, neutral side chains.. It participates in protein modification; lipoprotein biosynthesis (signal peptide cleavage). Its function is as follows. This protein specifically catalyzes the removal of signal peptides from prolipoproteins. The sequence is that of Lipoprotein signal peptidase from Thermosynechococcus vestitus (strain NIES-2133 / IAM M-273 / BP-1).